A 206-amino-acid polypeptide reads, in one-letter code: MRPLTPRQAEILELIKRNIAETGMPPTRAEIATRLGFKSANAAEEHLKALAKKGCIEIMPGTSRGIRLPVEEEDNSETGLPLIGQVAAGEPILAQEHVEQYYQIDPSMFHPTANFLLRVKGDSMKNIGILEGDLLAVHKVQQARNGQVVVARVDDDVTVKRFEKKGNVVYLHAENEDYSPIKVDLSFQSLTIEGLAVGVIRNGDWL.

The H-T-H motif DNA-binding region spans 28 to 48; it reads RAEIATRLGFKSANAAEEHLK. Catalysis depends on for autocatalytic cleavage activity residues S123 and K160.

It belongs to the peptidase S24 family. Homodimer.

It carries out the reaction Hydrolysis of Ala-|-Gly bond in repressor LexA.. Represses a number of genes involved in the response to DNA damage (SOS response), including recA and lexA. In the presence of single-stranded DNA, RecA interacts with LexA causing an autocatalytic cleavage which disrupts the DNA-binding part of LexA, leading to derepression of the SOS regulon and eventually DNA repair. The sequence is that of LexA repressor from Shewanella oneidensis (strain ATCC 700550 / JCM 31522 / CIP 106686 / LMG 19005 / NCIMB 14063 / MR-1).